The primary structure comprises 237 residues: Platelet-aggregating proteinase PA-BJ (237 aa).

The propeptide occupies 1–5; the sequence is NSLVI. In terms of domain architecture, Peptidase S1 spans 6–229; it reads VVGGRPCKIN…YLPWIESIIA (224 aa). Disulfide bonds link Cys-12–Cys-144, Cys-31–Cys-47, Cys-79–Cys-236, Cys-123–Cys-191, Cys-155–Cys-170, and Cys-181–Cys-205. The N-linked (GlcNAc...) asparagine glycan is linked to Asn-25. The O-linked (GalNAc...) serine glycan is linked to Ser-28. Catalysis depends on charge relay system residues His-46 and Asp-91. Ser-185 serves as the catalytic Charge relay system.

The protein belongs to the peptidase S1 family. Snake venom subfamily. In terms of assembly, monomer. Expressed by the venom gland.

The protein resides in the secreted. With respect to regulation, inhibited by PMSF. The amidolytic activity is also inhibited by benzamidine derivatives. Snake venom serine protease that induces platelet aggregation through activation of protease-activated platelet receptors (PAR1/F2R and PAR4/F2RL3). On F2R, the cleavage occurs at Arg41-Ser42 (like thrombin cleavage), and Arg46-Asn47. In normal condition of hemostasis, the cleavage of the Arg41-Ser42 bond liberates a new N-terminus that functions as an agonist. However after envenomation, the cleavage of Arg46-Asn47 bond degrades this potential agonist. This may explain why the snake protease is less potent than thrombin in causing platelet aggregation and release reaction. On F2RL3, a thrombin-like activity has also been proven by calcium release from lung fibroblasts transfected with this receptor. Possesses amidolytic activities. The chain is Platelet-aggregating proteinase PA-BJ from Bothrops jararaca (Jararaca).